A 282-amino-acid polypeptide reads, in one-letter code: Plant cysteine oxidase 3 (282 aa).

3 residues coordinate Fe cation: His131, His133, and His202.

This sequence belongs to the cysteine dioxygenase family. Requires Fe(2+) as cofactor.

The protein localises to the nucleus. Its subcellular location is the cytoplasm. The catalysed reaction is L-cysteine + O2 = 3-sulfino-L-alanine + H(+). Catalyzes the oxidation of N-terminal cysteine residues (N-Cys), thus preparing the protein for N-end rule pathway-mediated proteasomal degradation, upstream of the N-end rule enzymes ATE1, ATE2 and PRT6. Controls the preparation of the group VII ethylene response factor (ERF-VII) proteins for degradation via the 26S proteasome N-end rule pathway. Acts as an oxygen sensor that controls the stability of ERF-VII proteins, which are stabilized in flooding-induced hypoxia, and regulate transcriptional adaptation to these adverse conditions. The chain is Plant cysteine oxidase 3 from Arabidopsis thaliana (Mouse-ear cress).